The following is a 243-amino-acid chain: Probable 6-phosphogluconolactonase (243 aa).

This sequence belongs to the glucosamine/galactosamine-6-phosphate isomerase family. 6-phosphogluconolactonase subfamily.

The enzyme catalyses 6-phospho-D-glucono-1,5-lactone + H2O = 6-phospho-D-gluconate + H(+). It participates in carbohydrate degradation; pentose phosphate pathway; D-ribulose 5-phosphate from D-glucose 6-phosphate (oxidative stage): step 2/3. Its function is as follows. Hydrolysis of 6-phosphogluconolactone to 6-phosphogluconate. The protein is Probable 6-phosphogluconolactonase of Drosophila melanogaster (Fruit fly).